Here is a 411-residue protein sequence, read N- to C-terminus: Gamma-glutamyl phosphate reductase (411 aa).

It belongs to the gamma-glutamyl phosphate reductase family.

It is found in the cytoplasm. The enzyme catalyses L-glutamate 5-semialdehyde + phosphate + NADP(+) = L-glutamyl 5-phosphate + NADPH + H(+). It participates in amino-acid biosynthesis; L-proline biosynthesis; L-glutamate 5-semialdehyde from L-glutamate: step 2/2. Functionally, catalyzes the NADPH-dependent reduction of L-glutamate 5-phosphate into L-glutamate 5-semialdehyde and phosphate. The product spontaneously undergoes cyclization to form 1-pyrroline-5-carboxylate. This chain is Gamma-glutamyl phosphate reductase, found in Nautilia profundicola (strain ATCC BAA-1463 / DSM 18972 / AmH).